Consider the following 114-residue polypeptide: Transmembrane protein 14C (114 aa).

Transmembrane regions (helical) follow at residues 8-28 (LMPL…GGII), 33-53 (AGSV…GLGA), 63-83 (VWVF…RFYN), and 89-109 (PAGL…ISLL).

It belongs to the TMEM14 family.

It is found in the mitochondrion membrane. In terms of biological role, required for normal heme biosynthesis. The polypeptide is Transmembrane protein 14C (Tmem14c) (Mus musculus (Mouse)).